A 1113-amino-acid polypeptide reads, in one-letter code: Coiled-coil domain-containing protein 158 (1113 aa).

Residues 1–14 are compositionally biased toward polar residues; sequence MESKAWESNNEDLL. Positions 1-26 are disordered; that stretch reads MESKAWESNNEDLLSSSGVTSNGGSS. Residues 15–26 are compositionally biased toward low complexity; it reads SSSGVTSNGGSS. Coiled-coil stretches lie at residues 72 to 183 and 243 to 833; these read GKEH…LSHE and VEDQ…QEQE. 2 disordered regions span residues 848–902 and 955–1062; these read LQGP…DPTR and CHRS…IETT. Polar residues-rich tracts occupy residues 867–894, 955–974, 994–1017, 1024–1040, and 1053–1062; these read ASVT…TKAN, CHRS…SSET, FTFT…SSPK, LLTS…SQYR, and DSQSPPIETT. Residues 1061 to 1113 are a coiled coil; the sequence is TTGKTCRKLQNRLESLQTLVEDLQLKNQAMSSMIRNQEKRIQKVKDQEKMLLK.

This Homo sapiens (Human) protein is Coiled-coil domain-containing protein 158 (CCDC158).